Here is a 672-residue protein sequence, read N- to C-terminus: Transmembrane 9 superfamily member 2 (672 aa).

The N-terminal stretch at 1–18 (MKRGVWLLIYCYATLTKG) is a signal peptide. The Extracellular segment spans residues 19–307 (FSLPGLSPTT…DKYLHIYDPQ (289 aa)). Residues 308 to 328 (IQWFSLINFSVIVILLSSVVM) form a helical membrane-spanning segment. The Cytoplasmic segment spans residues 329–383 (HSLLRALKSDLARYNELNLDNEFHEDSGWKLGHGDVFRTPSKSMLLSILVGSGMQ). A helical membrane pass occupies residues 384–404 (LFLMVMCSIFFAAVGLVSPVS). Over 405–410 (RGSLPT) the chain is Extracellular. Residues 411–431 (VMFVLYALFGFVGSYASMGVY) traverse the membrane as a helical segment. Over 432-447 (KFFRGPYWKANMILTP) the chain is Cytoplasmic. Residues 448 to 468 (ILLPGAIFLLIVIMNFFLLFA) traverse the membrane as a helical segment. The Extracellular portion of the chain corresponds to 469 to 479 (HSSGVIPARSL). Residues 480–500 (FFIILLWFLVSVPLSFAGSIV) traverse the membrane as a helical segment. At 501-532 (AHKQCNWDEHPTKTNQIARQIPYQPWYLRTAQ) the chain is on the cytoplasmic side. A helical membrane pass occupies residues 533 to 553 (ATLIAGIFSFGSIAVELYFIY). Over 554–565 (SSLWFNKIFYMF) the chain is Extracellular. A helical membrane pass occupies residues 566-586 (GFLLFSFLLLTLTTSLVTILI). Residues 587–601 (TYYSLCLENWLWQWR) lie on the Cytoplasmic side of the membrane. A helical membrane pass occupies residues 602-622 (SFIIGGLGCSIYTFIHSILFT). At 623-628 (KFKLGG) the chain is on the extracellular side. The helical transmembrane segment at 629–649 (VITVVLYLGYSLIISALCCVV) threads the bilayer. Residues 650–672 (TGAIGFFSSMFFIRKIYSAIKVE) are Cytoplasmic-facing.

Belongs to the nonaspanin (TM9SF) (TC 9.A.2) family.

The protein resides in the vacuole membrane. In terms of biological role, with EMP70 and TMN3, plays a critical role in the late stages of a nutrient-controlled pathway notably regulating FLO11 gene expression. Acts downstream of RAS2 and TOR. Essential for cell adhesion and filamentous growth. May play a role as effector of cellular copper homeostasis. The chain is Transmembrane 9 superfamily member 2 (TMN2) from Saccharomyces cerevisiae (strain ATCC 204508 / S288c) (Baker's yeast).